We begin with the raw amino-acid sequence, 200 residues long: Snake venom serine protease VaSP1 (200 aa).

Residues 1-200 (VIGGDECNIN…EIQGIVSYGK (200 aa)) enclose the Peptidase S1 domain. Residues aspartate 88 and serine 182 each act as charge relay system in the active site.

In terms of assembly, monomer. In terms of processing, N-glycosylated. The protein exist in multiple isoforms. Expressed by the venom gland.

Its subcellular location is the secreted. Inhibited by Pefabloc (90% inhibition), DTT (90%), Zn(2+) (80%), trypsin inhibitor II (50%), and benzamidine (45%), but not inhibited by EDTA, Ca(2+), Mg(2+) and L-Cys. Functionally, snake venom serine protease active on several blood coagulation enzymes. It completely cleaves fibrinogen Aalpha chain (FGA) after 120 minutes, partially cleaves Bbeta chain (FGB) (overnight) and has no activity on gamma chain. It does not release fibrinopeptides A and/or B exclusively, since the enzyme does not provoke fibrin polymerisation. It also degrades fibrin as efficiently as plasmin, and exhibits potent ability to cleave plasminogen and prothrombin, as well as heavy chain of factor X (F10). In vitro, it cleaves insulin B-chain (at positions His38-Leu39, Ala40-Leu41 and Tyr16-Leu17). This Vipera ammodytes ammodytes (Western sand viper) protein is Snake venom serine protease VaSP1.